The sequence spans 262 residues: Methionine-rich nacre protein (262 aa).

An N-terminal signal peptide occupies residues 1-22 (MSIMRRILCLAVVIFIINDVSS). The segment covering 26 to 35 (GNNKNWKKNG) has biased composition (low complexity). The interval 26–84 (GNNKNWKKNGMSLSSPGNKKPTGNNAVPQKSKMNNMNQNSLSQPKRSSPPGNSMYNMAN) is disordered. The span at 36 to 84 (MSLSSPGNKKPTGNNAVPQKSKMNNMNQNSLSQPKRSSPPGNSMYNMAN) shows a compositional bias: polar residues.

In terms of tissue distribution, expressed in mantle and, after secretion, incorporated into acid-insoluble nacre matrix of the shell (at protein level). Expressed primarily in the mantle with highest level in the mantle pallium and lower level in the mantle edge.

Its subcellular location is the secreted. The sequence is that of Methionine-rich nacre protein from Pinctada maxima (Silver-lipped pearl oyster).